Consider the following 342-residue polypeptide: S-adenosylmethionine:tRNA ribosyltransferase-isomerase (342 aa).

This sequence belongs to the QueA family. In terms of assembly, monomer.

The protein resides in the cytoplasm. It carries out the reaction 7-aminomethyl-7-carbaguanosine(34) in tRNA + S-adenosyl-L-methionine = epoxyqueuosine(34) in tRNA + adenine + L-methionine + 2 H(+). Its pathway is tRNA modification; tRNA-queuosine biosynthesis. In terms of biological role, transfers and isomerizes the ribose moiety from AdoMet to the 7-aminomethyl group of 7-deazaguanine (preQ1-tRNA) to give epoxyqueuosine (oQ-tRNA). This is S-adenosylmethionine:tRNA ribosyltransferase-isomerase from Campylobacter jejuni subsp. jejuni serotype O:6 (strain 81116 / NCTC 11828).